A 375-amino-acid chain; its full sequence is Succinyl-diaminopimelate desuccinylase (375 aa).

H66 contributes to the Zn(2+) binding site. D68 is a catalytic residue. D99 provides a ligand contact to Zn(2+). The active-site Proton acceptor is E133. Zn(2+) contacts are provided by E134, E162, and H348.

The protein belongs to the peptidase M20A family. DapE subfamily. In terms of assembly, homodimer. It depends on Zn(2+) as a cofactor. Requires Co(2+) as cofactor.

The catalysed reaction is N-succinyl-(2S,6S)-2,6-diaminopimelate + H2O = (2S,6S)-2,6-diaminopimelate + succinate. It functions in the pathway amino-acid biosynthesis; L-lysine biosynthesis via DAP pathway; LL-2,6-diaminopimelate from (S)-tetrahydrodipicolinate (succinylase route): step 3/3. In terms of biological role, catalyzes the hydrolysis of N-succinyl-L,L-diaminopimelic acid (SDAP), forming succinate and LL-2,6-diaminopimelate (DAP), an intermediate involved in the bacterial biosynthesis of lysine and meso-diaminopimelic acid, an essential component of bacterial cell walls. This is Succinyl-diaminopimelate desuccinylase from Shigella sonnei (strain Ss046).